Reading from the N-terminus, the 1343-residue chain is DNA-directed RNA polymerase subunit beta (1343 aa).

It belongs to the RNA polymerase beta chain family. As to quaternary structure, the RNAP catalytic core consists of 2 alpha, 1 beta, 1 beta' and 1 omega subunit. When a sigma factor is associated with the core the holoenzyme is formed, which can initiate transcription.

The catalysed reaction is RNA(n) + a ribonucleoside 5'-triphosphate = RNA(n+1) + diphosphate. Its function is as follows. DNA-dependent RNA polymerase catalyzes the transcription of DNA into RNA using the four ribonucleoside triphosphates as substrates. The sequence is that of DNA-directed RNA polymerase subunit beta from Haemophilus influenzae (strain PittEE).